Reading from the N-terminus, the 1049-residue chain is RTX-III toxin determinant A from serotype 2 (1049 aa).

The next 3 helical transmembrane spans lie at 154–170 (TIIS…LAGI), 315–331 (ALIA…LAFL), and 397–413 (LVGA…TGLI). 6 Hemolysin-type calcium-binding repeats span residues 743–760 (KGSK…DDLL), 761–778 (NGND…NDEL), 779–796 (RGDN…DDKL), 797–814 (LGGN…NDEL), 825–842 (RGGK…SDLL), and 843–860 (DGGE…SDFY).

It belongs to the RTX prokaryotic toxin (TC 1.C.11) family. In terms of processing, palmitoylated by ApxIIIC. The toxin only becomes active when modified.

It is found in the secreted. The protein resides in the host cell membrane. In terms of biological role, does not have hemolytic activity but shows a strong cytotoxicity towards alveolar macrophages and neutrophils. In Actinobacillus pleuropneumoniae (Haemophilus pleuropneumoniae), this protein is RTX-III toxin determinant A from serotype 2 (apxIIIA).